We begin with the raw amino-acid sequence, 496 residues long: NADH-quinone oxidoreductase subunit N (496 aa).

The next 14 helical transmembrane spans lie at 12–32 (LNLITLAPMLVAIAGGLIILI), 43–63 (SLYVMLTILILVIDFGATLGL), 79–99 (VSIVSQLLIIVASILFTPLAL), 108–128 (SYPEFFALFLFMVAGFQFMVA), 132–152 (LILIFVGLETASLSLYTLIAL), 166–186 (FTMGALAAAFFAMGSAVIYAL), 207–227 (GLMIAIFGSSVLLLVAFAFKL), 257–277 (VAAFVVSIRIFGMYIDLGVEW), 280–300 (VVILVLAVLTMTLANLMALVQ), 306–326 (MLAYSSISHAGFIIAALALDT), 333–353 (IFFYYGLFMFTNLGAFAMLWM), 383–403 (AVIMAIFMLSLAGVPPFSIFW), 416–436 (GYVWLAIVMGLNSAIAAYYYL), and 464–484 (AVVGFAAVATIAAIFYVQPLV).

Belongs to the complex I subunit 2 family. In terms of assembly, NDH-1 is composed of 14 different subunits. Subunits NuoA, H, J, K, L, M, N constitute the membrane sector of the complex.

Its subcellular location is the cell inner membrane. It carries out the reaction a quinone + NADH + 5 H(+)(in) = a quinol + NAD(+) + 4 H(+)(out). NDH-1 shuttles electrons from NADH, via FMN and iron-sulfur (Fe-S) centers, to quinones in the respiratory chain. The immediate electron acceptor for the enzyme in this species is believed to be ubiquinone. Couples the redox reaction to proton translocation (for every two electrons transferred, four hydrogen ions are translocated across the cytoplasmic membrane), and thus conserves the redox energy in a proton gradient. The polypeptide is NADH-quinone oxidoreductase subunit N (Sulfurovum sp. (strain NBC37-1)).